Consider the following 656-residue polypeptide: PAN2-PAN3 deadenylation complex subunit PAN3 (656 aa).

Residues 15 to 44 (SFKGTQCRNIIIHGYCKFENEGCQFNHGNS) form a C3H1-type zinc finger. The interval 71–104 (KTSSSFTPGKSPAVRSPDFSSLPAFQPGAPVNDQ) is disordered. The PABPC-interacting motif-2 (PAM-2) motif lies at 128–148 (AFAPSFNPYASESFTPSVSAG). Residues 271–525 (QVFPRGSLPD…NIEDFTKLFS (255 aa)) are pseudokinase domain. ATP contacts are provided by residues Arg-325, 375-382 (DYYPQSQS), and 428-429 (KK). A coiled-coil region spans residues 526-564 (HKVLSVVNSLQYNSEYLEQQLSRELENARLFRLMCKLNA). A knob domain region spans residues 565–656 (IYGRLESRID…IDSTFRALTQ (92 aa)).

This sequence belongs to the protein kinase superfamily. PAN3 family. Homodimer. Forms a heterotrimer with a catalytic subunit PAN2 to form the poly(A)-nuclease (PAN) deadenylation complex. Interacts (via PAM-2 motif) with poly(A)-binding protein PAB1 (via PABC domain), conferring substrate specificity of the enzyme complex.

The protein resides in the cytoplasm. Functionally, regulatory subunit of the poly(A)-nuclease (PAN) deadenylation complex, one of two cytoplasmic mRNA deadenylases involved in mRNA turnover. PAN specifically shortens poly(A) tails of RNA and the activity is stimulated by poly(A)-binding protein PAB1. PAN deadenylation is followed by rapid degradation of the shortened mRNA tails by the CCR4-NOT complex. Deadenylated mRNAs are then degraded by two alternative mechanisms, namely exosome-mediated 3'-5' exonucleolytic degradation, or deadenylation-dependent mRNA decaping and subsequent 5'-3' exonucleolytic degradation by XRN1. May also be involved in post-transcriptional maturation of mRNA poly(A) tails. PAN3 acts as a positive regulator for PAN activity, recruiting the catalytic subunit PAN2 to mRNA via its interaction with RNA and with PAB1. The chain is PAN2-PAN3 deadenylation complex subunit PAN3 from Kluyveromyces lactis (strain ATCC 8585 / CBS 2359 / DSM 70799 / NBRC 1267 / NRRL Y-1140 / WM37) (Yeast).